A 235-amino-acid polypeptide reads, in one-letter code: Exosome complex component Rrp4 (235 aa).

The region spanning 67–139 (GDVVIGLIQS…KTRSPLLTVQ (73 aa)) is the S1 motif domain. Residues 149–205 (GKIVEISPAKVPRVIGRKMSMLKTLEEKTECKIFVARNGRIHLECPNEDLEAIAVMA) enclose the KH domain.

Belongs to the RRP4 family. In terms of assembly, component of the archaeal exosome complex. Forms a trimer of Rrp4 and/or Csl4 subunits. The trimer associates with a hexameric ring-like arrangement composed of 3 Rrp41-Rrp42 heterodimers.

It is found in the cytoplasm. In terms of biological role, non-catalytic component of the exosome, which is a complex involved in RNA degradation. Increases the RNA binding and the efficiency of RNA degradation. Confers strong poly(A) specificity to the exosome. The sequence is that of Exosome complex component Rrp4 from Aeropyrum pernix (strain ATCC 700893 / DSM 11879 / JCM 9820 / NBRC 100138 / K1).